The primary structure comprises 339 residues: ADP-L-glycero-D-manno-heptose-6-epimerase (339 aa).

NADP(+) contacts are provided by residues F11 to I12, D32 to D33, K39, K54, E75 to S79, and N92. The Proton acceptor role is filled by Y139. NADP(+) is bound at residue K143. N170 contributes to the substrate binding site. 2 residues coordinate NADP(+): V171 and K179. K179 serves as the catalytic Proton acceptor. Substrate contacts are provided by residues R181, H188, F202–Y205, R215, and Y294.

This sequence belongs to the NAD(P)-dependent epimerase/dehydratase family. HldD subfamily. Homopentamer. NADP(+) serves as cofactor.

It catalyses the reaction ADP-D-glycero-beta-D-manno-heptose = ADP-L-glycero-beta-D-manno-heptose. The protein operates within nucleotide-sugar biosynthesis; ADP-L-glycero-beta-D-manno-heptose biosynthesis; ADP-L-glycero-beta-D-manno-heptose from D-glycero-beta-D-manno-heptose 7-phosphate: step 4/4. Catalyzes the interconversion between ADP-D-glycero-beta-D-manno-heptose and ADP-L-glycero-beta-D-manno-heptose via an epimerization at carbon 6 of the heptose. The chain is ADP-L-glycero-D-manno-heptose-6-epimerase from Polynucleobacter necessarius subsp. necessarius (strain STIR1).